The chain runs to 165 residues: Lipoprotein signal peptidase (165 aa).

Helical transmembrane passes span 66–86 and 91–111; these read WQFW…LSLT and NEPV…GNLV. Catalysis depends on residues Asp121 and Asp139. A helical transmembrane segment spans residues 132–152; sequence WPAFNVADIAICIGAFLAFVA.

The protein belongs to the peptidase A8 family.

The protein resides in the cell inner membrane. The catalysed reaction is Release of signal peptides from bacterial membrane prolipoproteins. Hydrolyzes -Xaa-Yaa-Zaa-|-(S,diacylglyceryl)Cys-, in which Xaa is hydrophobic (preferably Leu), and Yaa (Ala or Ser) and Zaa (Gly or Ala) have small, neutral side chains.. It functions in the pathway protein modification; lipoprotein biosynthesis (signal peptide cleavage). Its function is as follows. This protein specifically catalyzes the removal of signal peptides from prolipoproteins. This is Lipoprotein signal peptidase from Nitratidesulfovibrio vulgaris (strain DP4) (Desulfovibrio vulgaris).